Here is a 1142-residue protein sequence, read N- to C-terminus: Probable serine/threonine-protein kinase fhkB (1142 aa).

Residues 1-16 (MSQDIQTQNSYSDELY) show a composition bias toward polar residues. 3 disordered regions span residues 1 to 359 (MSQD…RLSQ), 374 to 404 (NTHT…KKQQ), and 432 to 451 (QIIG…QPPV). 2 stretches are compositionally biased toward low complexity: residues 17–72 (SSQI…FSQN) and 83–157 (QNSY…PSSQ). Over residues 158 to 178 (KRFFQSQNDDFVPSSQVTSLQ) the composition is skewed to polar residues. A coiled-coil region spans residues 186–302 (IQQQQQQQQQ…DYEQENDDDD (117 aa)). Low complexity predominate over residues 187 to 260 (QQQQQQQQQQ…QQTQQQQQQP (74 aa)). 2 stretches are compositionally biased toward acidic residues: residues 261 to 277 (QEDD…DNYE) and 283 to 325 (EGEE…EEES). Residues 333 to 348 (RALQSRSSQSRPLLRS) are compositionally biased toward low complexity. The segment covering 374 to 397 (NTHTNQLGQSSQQTNSPNVHFNSL) has biased composition (polar residues). Residues 393-434 (HFNSLQQKKKQQQQQQQQQQQQQQQQQQQQQQQQQQQSQQII) are a coiled coil. Over residues 432–443 (QIIGSQSSQSSQ) the composition is skewed to low complexity. The region spanning 480-551 (IVVGRSSSCD…NGSYINGELI (72 aa)) is the FHA domain. Residues 625 to 885 (YYFVKEIGSG…IKEALNHPWF (261 aa)) enclose the Protein kinase domain. Residues 631-639 (IGSGGYGIV) and lysine 654 contribute to the ATP site. Aspartate 747 serves as the catalytic Proton acceptor. Residues 947–1142 (FDNNNNNNNN…HQQYTQHTTM (196 aa)) form a disordered region. Residues 949–1034 (NNNNNNNNNN…HNHNLNNHNH (86 aa)) show a composition bias toward low complexity. Positions 1035-1067 (NNNHHHNHNHNHNHNHNHNHNHNHNHNHNHNHN) are enriched in basic residues. The segment covering 1068 to 1133 (NHNNNNNNNN…NNINNNNNYH (66 aa)) has biased composition (low complexity). The stretch at 1090–1132 (NNNNNNNNNNNNNNNNNNNNYYNNNINNINNNINNNINNNNNY) forms a coiled coil.

The protein belongs to the protein kinase superfamily. CAMK Ser/Thr protein kinase family. CHK2 subfamily.

The catalysed reaction is L-seryl-[protein] + ATP = O-phospho-L-seryl-[protein] + ADP + H(+). It catalyses the reaction L-threonyl-[protein] + ATP = O-phospho-L-threonyl-[protein] + ADP + H(+). In Dictyostelium discoideum (Social amoeba), this protein is Probable serine/threonine-protein kinase fhkB (fhkB).